A 468-amino-acid chain; its full sequence is F-box/LRR-repeat protein At4g14096 (468 aa).

The F-box domain occupies 7–60 (RDIISSLPEAISCHILSFLPTKEAASTSVLSKKWRYLFAFVPNLDLDESVYLNP). LRR repeat units lie at residues 114 to 136 (VSDL…MFLS), 138 to 167 (TLVR…YIDS), 169 to 194 (YFEK…VLDD), 216 to 241 (STQV…KFTD), 292 to 323 (TLYL…TIES), and 324 to 349 (NPEV…IFQG).

The polypeptide is F-box/LRR-repeat protein At4g14096 (Arabidopsis thaliana (Mouse-ear cress)).